A 191-amino-acid chain; its full sequence is Holliday junction branch migration complex subunit RuvA (191 aa).

The tract at residues 1-64 is domain I; that stretch reads MIGRLSGVLL…EDAHILFGFG (64 aa). A domain II region spans residues 65–137; that stretch reads TNEERNVFKQ…LKGKLGADLG (73 aa). The tract at residues 137-141 is flexible linker; that stretch reads GVAGA. Positions 142–191 are domain III; that stretch reads VATDATSDILNALLALGYSDKEAMLALKQVPAGTGVSDGIKLALKSLSKA.

The protein belongs to the RuvA family. In terms of assembly, homotetramer. Forms an RuvA(8)-RuvB(12)-Holliday junction (HJ) complex. HJ DNA is sandwiched between 2 RuvA tetramers; dsDNA enters through RuvA and exits via RuvB. An RuvB hexamer assembles on each DNA strand where it exits the tetramer. Each RuvB hexamer is contacted by two RuvA subunits (via domain III) on 2 adjacent RuvB subunits; this complex drives branch migration. In the full resolvosome a probable DNA-RuvA(4)-RuvB(12)-RuvC(2) complex forms which resolves the HJ.

The protein resides in the cytoplasm. Functionally, the RuvA-RuvB-RuvC complex processes Holliday junction (HJ) DNA during genetic recombination and DNA repair, while the RuvA-RuvB complex plays an important role in the rescue of blocked DNA replication forks via replication fork reversal (RFR). RuvA specifically binds to HJ cruciform DNA, conferring on it an open structure. The RuvB hexamer acts as an ATP-dependent pump, pulling dsDNA into and through the RuvAB complex. HJ branch migration allows RuvC to scan DNA until it finds its consensus sequence, where it cleaves and resolves the cruciform DNA. The polypeptide is Holliday junction branch migration complex subunit RuvA (Janthinobacterium sp. (strain Marseille) (Minibacterium massiliensis)).